A 413-amino-acid polypeptide reads, in one-letter code: Arginine biosynthesis bifunctional protein ArgJ (413 aa).

Substrate contacts are provided by threonine 163, lysine 189, threonine 200, glutamate 286, asparagine 408, and threonine 413. The Nucleophile role is filled by threonine 200.

The protein belongs to the ArgJ family. As to quaternary structure, heterotetramer of two alpha and two beta chains.

Its subcellular location is the cytoplasm. The catalysed reaction is N(2)-acetyl-L-ornithine + L-glutamate = N-acetyl-L-glutamate + L-ornithine. It carries out the reaction L-glutamate + acetyl-CoA = N-acetyl-L-glutamate + CoA + H(+). It functions in the pathway amino-acid biosynthesis; L-arginine biosynthesis; L-ornithine and N-acetyl-L-glutamate from L-glutamate and N(2)-acetyl-L-ornithine (cyclic): step 1/1. It participates in amino-acid biosynthesis; L-arginine biosynthesis; N(2)-acetyl-L-ornithine from L-glutamate: step 1/4. Its function is as follows. Catalyzes two activities which are involved in the cyclic version of arginine biosynthesis: the synthesis of N-acetylglutamate from glutamate and acetyl-CoA as the acetyl donor, and of ornithine by transacetylation between N(2)-acetylornithine and glutamate. The polypeptide is Arginine biosynthesis bifunctional protein ArgJ (Staphylococcus aureus (strain Mu50 / ATCC 700699)).